The chain runs to 461 residues: Acetylcholine receptor subunit alpha (461 aa).

An N-terminal signal peptide occupies residues M1–G24. At S25–I234 the chain is on the extracellular side. Cystine bridges form between C152-C166 and C216-C217. The N-linked (GlcNAc...) asparagine glycan is linked to N165. 3 helical membrane-spanning segments follow: residues P235–L259, M267–V285, and Y301–I320. Residues N321–H432 lie on the Cytoplasmic side of the membrane. A helical transmembrane segment spans residues I433–A451.

Belongs to the ligand-gated ion channel (TC 1.A.9) family. Acetylcholine receptor (TC 1.A.9.1) subfamily. Alpha-1/CHRNA1 sub-subfamily. Pentamer of two alpha chains, and one each of the beta, delta, and gamma chains.

It localises to the postsynaptic cell membrane. Its subcellular location is the cell membrane. It catalyses the reaction K(+)(in) = K(+)(out). The catalysed reaction is Na(+)(in) = Na(+)(out). Its function is as follows. Upon acetylcholine binding, the AChR responds by an extensive change in conformation that affects all subunits and leads to opening of an ion-conducting channel across the plasma membrane. The protein is Acetylcholine receptor subunit alpha (CHRNA1) of Torpedo marmorata (Marbled electric ray).